A 139-amino-acid chain; its full sequence is Iron-sulfur cluster assembly 1 homolog, mitochondrial (139 aa).

Positions 52, 117, and 119 each coordinate Fe cation.

This sequence belongs to the HesB/IscA family.

Its subcellular location is the mitochondrion. Functionally, involved in the assembly of mitochondrial iron-sulfur proteins. Probably involved in the binding of an intermediate of Fe/S cluster assembly. This chain is Iron-sulfur cluster assembly 1 homolog, mitochondrial (isca1), found in Dictyostelium discoideum (Social amoeba).